Consider the following 102-residue polypeptide: YcgL domain-containing protein MS1047 (102 aa).

Residues 1 to 85 enclose the YcgL domain; sequence MLCAIYKSKK…KQESLFEQFK (85 aa).

This is YcgL domain-containing protein MS1047 from Mannheimia succiniciproducens (strain KCTC 0769BP / MBEL55E).